A 169-amino-acid polypeptide reads, in one-letter code: Inorganic pyrophosphatase (169 aa).

Substrate contacts are provided by K26, R40, and Y52. Residues D62, D67, and D99 each contribute to the Mg(2+) site. Y138 serves as a coordination point for substrate.

It belongs to the PPase family. Homohexamer. Mg(2+) is required as a cofactor.

The protein resides in the cytoplasm. It carries out the reaction diphosphate + H2O = 2 phosphate + H(+). Its function is as follows. Catalyzes the hydrolysis of inorganic pyrophosphate (PPi) forming two phosphate ions. This chain is Inorganic pyrophosphatase, found in Thermoplasma volcanium (strain ATCC 51530 / DSM 4299 / JCM 9571 / NBRC 15438 / GSS1).